The primary structure comprises 788 residues: Cap-specific mRNA (nucleoside-2'-O-)-methyltransferase 1 (788 aa).

The region spanning 25 to 71 (YSNKAMEMMKKMGYENDKGLGKSNQGRLEPIIAVQQDGRRGFGLKLD) is the G-patch domain. Substrate contacts are provided by residues 143 to 147 (KTVFD) and Arg158. Residues 171–384 (IFLNRAAVKM…ERYLVCKYKR (214 aa)) form the RrmJ-type SAM-dependent 2'-O-MTase domain. Residue Asn174 coordinates S-adenosyl-L-methionine. The active site involves Lys179. S-adenosyl-L-methionine is bound at residue 215-221 (CAGPGGF). Residue Asp298 is part of the active site. 308–310 (NIQ) contributes to the substrate binding site. Lys338 acts as the Proton acceptor in catalysis. Residue Asn373 participates in substrate binding.

As to quaternary structure, interacts (via C-terminus) with r2d2 (via C-terminus).

It localises to the nucleus. The protein localises to the cytoplasm. The enzyme catalyses a 5'-end (N(7)-methyl 5'-triphosphoguanosine)-ribonucleoside in mRNA + S-adenosyl-L-methionine = a 5'-end (N(7)-methyl 5'-triphosphoguanosine)-(2'-O-methyl-ribonucleoside) in mRNA + S-adenosyl-L-homocysteine + H(+). Functionally, S-adenosyl-L-methionine-dependent methyltransferase that mediates mRNA cap1 2'-O-ribose methylation to the 5'-cap structure of mRNAs. Methylates the ribose of the first nucleotide of a m(7)GpppG-capped mRNA to produce m(7)GpppNmp (cap1). Positively regulates the Ago2-dependent small RNA pathway, with roles in both siRNA biogenesis and RISC assembly. Involved in facilitating conversion of pre-RISC into holo-RISC, possibly by promoting the unwinding of Ago2-bound siRNA duplexes and thus the retention of the guide strand in holo-RISC. The protein is Cap-specific mRNA (nucleoside-2'-O-)-methyltransferase 1 of Drosophila melanogaster (Fruit fly).